Consider the following 751-residue polypeptide: Semaphorin-3C (751 aa).

The signal sequence occupies residues 1–21 (MAFRTICVLVGVFICSICVKG). The Sema domain occupies 28 to 511 (RVYLTFDELR…SNEGVSQVSL (484 aa)). The N-linked (GlcNAc...) asparagine glycan is linked to N81. An intrachain disulfide couples C101 to C112. N-linked (GlcNAc...) asparagine glycosylation occurs at N123. A disulfide bridge connects residues C130 and C139. N-linked (GlcNAc...) asparagine glycosylation is found at N252 and N268. 2 disulfide bridges follow: C266-C378 and C290-C338. N465 carries N-linked (GlcNAc...) asparagine glycosylation. A disulfide bridge links C514 with C532. The Ig-like C2-type domain maps to 571-655 (AYRNAAEIVQ…TENSFKQTIA (85 aa)). Residues N585 and N586 are each glycosylated (N-linked (GlcNAc...) asparagine). A disulfide bond links C592 and C643. The segment covering 712 to 731 (TRQQHQQGDESQKMRGDYGK) has biased composition (basic and acidic residues). The interval 712 to 751 (TRQQHQQGDESQKMRGDYGKLKALINSRKSRNRRNQLPES) is disordered.

The protein belongs to the semaphorin family. In terms of assembly, interacts with PLXND1.

It localises to the secreted. In terms of biological role, binds to plexin family members and plays an important role in the regulation of developmental processes. Required for normal cardiovascular development during embryogenesis. Functions as attractant for growing axons, and thereby plays an important role in axon growth and axon guidance. The sequence is that of Semaphorin-3C (SEMA3C) from Pongo abelii (Sumatran orangutan).